The sequence spans 750 residues: GTP pyrophosphokinase rsh (750 aa).

Residues 45–144 form the HD domain; sequence YFSHPLEVAA…VKLADRLHNM (100 aa). Positions 390 to 451 constitute a TGS domain; it reads DQVFCFTPKG…KNGDEVDIIR (62 aa). The disordered stretch occupies residues 587–613; sequence AAKVDPAATTPKPGKRALPIRGTNPDL. Residues 676–750 enclose the ACT domain; sequence RISVSAINSP…SVSSAKRVNG (75 aa).

Belongs to the RelA/SpoT family.

The catalysed reaction is GTP + ATP = guanosine 3'-diphosphate 5'-triphosphate + AMP. In terms of biological role, functions as a (p)ppGpp synthase. In eubacteria ppGpp (guanosine 3'-diphosphate 5'-diphosphate) is a mediator of the stringent response that coordinates a variety of cellular activities in response to changes in nutritional abundance. It is necessary for persistence in mice, essential for intracellular growth of Brucella and required for expression of the type IV secretion system VirB and therefore plays a role in adaptation of Brucella to its intracellular host environment. The chain is GTP pyrophosphokinase rsh (rsh) from Brucella suis biovar 1 (strain 1330).